The chain runs to 418 residues: Tubulin alpha chain (418 aa).

GTP-binding residues include Gln-11, Glu-71, Ser-140, Gly-144, Thr-179, Asn-206, and Asn-228. Glu-71 contacts Mg(2+). The active site involves Glu-255.

The protein belongs to the tubulin family. Dimer of alpha and beta chains. A typical microtubule is a hollow water-filled tube with an outer diameter of 25 nm and an inner diameter of 15 nM. Alpha-beta heterodimers associate head-to-tail to form protofilaments running lengthwise along the microtubule wall with the beta-tubulin subunit facing the microtubule plus end conferring a structural polarity. Microtubules usually have 13 protofilaments but different protofilament numbers can be found in some organisms and specialized cells. Requires Mg(2+) as cofactor.

It is found in the cytoplasm. The protein localises to the cytoskeleton. It carries out the reaction GTP + H2O = GDP + phosphate + H(+). Functionally, tubulin is the major constituent of microtubules, a cylinder consisting of laterally associated linear protofilaments composed of alpha- and beta-tubulin heterodimers. Microtubules grow by the addition of GTP-tubulin dimers to the microtubule end, where a stabilizing cap forms. Below the cap, tubulin dimers are in GDP-bound state, owing to GTPase activity of alpha-tubulin. The sequence is that of Tubulin alpha chain (TUB1) from Ajellomyces capsulatus (Darling's disease fungus).